Reading from the N-terminus, the 277-residue chain is 3-methyl-2-oxobutanoate hydroxymethyltransferase (277 aa).

Mg(2+)-binding residues include Asp-42 and Asp-81. 3-methyl-2-oxobutanoate contacts are provided by residues 42–43 (DS), Asp-81, and Lys-110. Glu-112 is a Mg(2+) binding site. The Proton acceptor role is filled by Glu-179.

This sequence belongs to the PanB family. Homodecamer; pentamer of dimers. It depends on Mg(2+) as a cofactor.

It is found in the cytoplasm. It carries out the reaction 3-methyl-2-oxobutanoate + (6R)-5,10-methylene-5,6,7,8-tetrahydrofolate + H2O = 2-dehydropantoate + (6S)-5,6,7,8-tetrahydrofolate. It participates in cofactor biosynthesis; (R)-pantothenate biosynthesis; (R)-pantoate from 3-methyl-2-oxobutanoate: step 1/2. Catalyzes the reversible reaction in which hydroxymethyl group from 5,10-methylenetetrahydrofolate is transferred onto alpha-ketoisovalerate to form ketopantoate. The chain is 3-methyl-2-oxobutanoate hydroxymethyltransferase from Anaplasma marginale (strain St. Maries).